A 168-amino-acid chain; its full sequence is Peptide deformylase (168 aa).

Residues cysteine 92 and histidine 134 each coordinate Fe cation. Glutamate 135 is an active-site residue. Histidine 138 contacts Fe cation.

Belongs to the polypeptide deformylase family. It depends on Fe(2+) as a cofactor.

The enzyme catalyses N-terminal N-formyl-L-methionyl-[peptide] + H2O = N-terminal L-methionyl-[peptide] + formate. Functionally, removes the formyl group from the N-terminal Met of newly synthesized proteins. Requires at least a dipeptide for an efficient rate of reaction. N-terminal L-methionine is a prerequisite for activity but the enzyme has broad specificity at other positions. The sequence is that of Peptide deformylase from Azotobacter vinelandii (strain DJ / ATCC BAA-1303).